The chain runs to 122 residues: Large ribosomal subunit protein uL29A (122 aa).

The stretch at 10-69 forms a coiled coil; sequence QLGIKQIEERAAEIKADLAALRQKKNSGDVGANDIKTAKKNLARALTVRREKILEELVEA.

The protein belongs to the universal ribosomal protein uL29 family. Component of the large ribosomal subunit.

Its subcellular location is the cytoplasm. This is Large ribosomal subunit protein uL29A (RPL35A) from Encephalitozoon cuniculi (strain GB-M1) (Microsporidian parasite).